The chain runs to 177 residues: Large ribosomal subunit protein uL6 (177 aa).

The protein belongs to the universal ribosomal protein uL6 family. As to quaternary structure, part of the 50S ribosomal subunit.

In terms of biological role, this protein binds to the 23S rRNA, and is important in its secondary structure. It is located near the subunit interface in the base of the L7/L12 stalk, and near the tRNA binding site of the peptidyltransferase center. This is Large ribosomal subunit protein uL6 from Sinorhizobium medicae (strain WSM419) (Ensifer medicae).